The chain runs to 214 residues: Transcriptional regulatory protein MctR (214 aa).

Residues 8–124 (RVLLIDNHPL…EIVSAIETVA (117 aa)) enclose the Response regulatory domain. A 4-aspartylphosphate modification is found at D59. One can recognise an HTH luxR-type domain in the interval 143–208 (VEEGSDPLTP…GLIRYALDHG (66 aa)). Positions 167–186 (NKEIAETLGITSATAETHRK) form a DNA-binding region, H-T-H motif.

It localises to the cytoplasm. Member of the two-component regulatory system MctS/MctR, which activates mctP expression. This is Transcriptional regulatory protein MctR from Rhizobium johnstonii (strain DSM 114642 / LMG 32736 / 3841) (Rhizobium leguminosarum bv. viciae).